Reading from the N-terminus, the 383-residue chain is Queuine tRNA-ribosyltransferase (383 aa).

The active-site Proton acceptor is D89. Substrate contacts are provided by residues 89 to 93, D143, Q187, and G214; that span reads DSGGF. Residues 245-251 are RNA binding; it reads GVGDLID. Catalysis depends on D264, which acts as the Nucleophile. The interval 269-273 is RNA binding; important for wobble base 34 recognition; that stretch reads TRNAR. Zn(2+) is bound by residues C302, C304, C307, and H333.

Belongs to the queuine tRNA-ribosyltransferase family. In terms of assembly, homodimer. Within each dimer, one monomer is responsible for RNA recognition and catalysis, while the other monomer binds to the replacement base PreQ1. Zn(2+) is required as a cofactor.

The enzyme catalyses 7-aminomethyl-7-carbaguanine + guanosine(34) in tRNA = 7-aminomethyl-7-carbaguanosine(34) in tRNA + guanine. It functions in the pathway tRNA modification; tRNA-queuosine biosynthesis. Its function is as follows. Catalyzes the base-exchange of a guanine (G) residue with the queuine precursor 7-aminomethyl-7-deazaguanine (PreQ1) at position 34 (anticodon wobble position) in tRNAs with GU(N) anticodons (tRNA-Asp, -Asn, -His and -Tyr). Catalysis occurs through a double-displacement mechanism. The nucleophile active site attacks the C1' of nucleotide 34 to detach the guanine base from the RNA, forming a covalent enzyme-RNA intermediate. The proton acceptor active site deprotonates the incoming PreQ1, allowing a nucleophilic attack on the C1' of the ribose to form the product. After dissociation, two additional enzymatic reactions on the tRNA convert PreQ1 to queuine (Q), resulting in the hypermodified nucleoside queuosine (7-(((4,5-cis-dihydroxy-2-cyclopenten-1-yl)amino)methyl)-7-deazaguanosine). The protein is Queuine tRNA-ribosyltransferase of Thermodesulfovibrio yellowstonii (strain ATCC 51303 / DSM 11347 / YP87).